A 205-amino-acid chain; its full sequence is Photosystem I assembly protein Ycf4 (205 aa).

The next 2 membrane-spanning stretches (helical) occupy residues 23–43 (WATV…SSYI) and 86–106 (LMCF…CLIF).

Belongs to the Ycf4 family.

Its subcellular location is the plastid. It is found in the chloroplast thylakoid membrane. Seems to be required for the assembly of the photosystem I complex. This is Photosystem I assembly protein Ycf4 from Tetradesmus obliquus (Green alga).